Reading from the N-terminus, the 196-residue chain is RNA-binding protein with multiple splicing (196 aa).

An N-acetylmethionine modification is found at methionine 1. At threonine 12 the chain carries Phosphothreonine. Residues 24–101 enclose the RRM domain; sequence RTLFVSGLPL…QTLRLEFAKA (78 aa). The interaction with RNA stretch occupies residues 98 to 105; that stretch reads FAKANTKM. Threonine 113 carries the phosphothreonine modification.

In terms of assembly, homodimer; each protein chain binds one RNA molecule via the external surface of the homodimer. Interacts with RNA binding proteins MBNL1, RBFOX2, RBM4 and RBM14; the interaction allows cooperative assembly of stable cell-specific alternative splicing regulatory complexes. Interacts with SMAD2, SMAD3 and SMAD4; the interactions are direct. As to expression, ubiquitously expressed, at various levels depending on the isoform and the tissue. Strongly expressed in the heart, prostate, small intestine, large intestine, and ovary; moderately expressed in the placenta, lung, liver, kidney, pancreas, and testis; and poorly expressed in the skeletal muscle, spleen, thymus and peripheral leukocytes.

The protein resides in the nucleus. Its subcellular location is the cytoplasm. The protein localises to the stress granule. It localises to the P-body. RNA binding protein that mediates the regulation of pre-mRNA alternative splicing (AS). Acts either as activator (FLNB, HSPG2, LIPA1, MYOCD, PTPRF and PPFIBP1) or repressor (TPM1, ACTN1, ITGA7, PIEZO1, LSM14B, MBNL1 and MBML2) of splicing events on specific pre-mRNA targets. Together with RNA binding proteins RBFOX2 and MBNL1/2, activates a splicing program associated with differentiated contractile vascular smooth muscle cells (SMC) by regulating AS of numerous pre-mRNA involved in actin cytoskeleton and focal adhesion machineries, suggesting a role in promoting a cell differentiated state. Binds to introns, exons and 3'-UTR associated with tandem CAC trinucleotide motifs separated by a variable spacer region, at a minimum as a dimer. The minimal length of RNA required for RBPMS-binding tandem CAC motifs is 15 nt, with spacing ranging from 1 to 9 nt. Can also bind to CA dinucleotide repeats. Mediates repression of TPM1 exon 3 by binding to CAC tandem repeats in the flanking intronic regions, followed by higher-order oligomerization and heterotypic interactions with other splicing regulators including MBNL1 and RBFOX2, which prevents assembly of ATP-dependent splicing complexes. In terms of biological role, acts as a regulator of pre-mRNA alternative splicing (AS). Binds mRNA. Regulates AS of ACTN1, FLNB, although with lower efficiency than isoform A / RBPMSA. Acts as coactivator of SMAD transcriptional activity in a TGFB1-dependent manner, possibly through increased phosphorylation of SMAD2 and SMAD3 at the C-terminal SSXS regions and promotion of the nuclear accumulation of SMAD proteins. The sequence is that of RNA-binding protein with multiple splicing from Homo sapiens (Human).